The following is a 323-amino-acid chain: MRVILGPMEGVLDHLMRDMLTQINDYDFCVTEFVRVVNLLLPDHVFYRLCPELQQGSKTPSGVPVKVQLLGQDPHWMAENAIRAAELGAYGIDLNFGCPAKMVNQSKGGAALLQHPELIYQVVKACRDAVPAHIPVSAKIRLGWEDPEDCFEIVDAVAQAKADELTVHARTKAGGYKASEIKWHYIDQIRQKCSIPLIANGEVWNYADGQACIQTTGVDSLMVCRGALNVPNLGNVVKHNHAAMPWHEVVDLLLRYTQFEVRGDKGKYYPNRIKQWFAYLRHAYPQANELFGELRTLTQVEPIVDQLHRYRDQLHHAAAELPV.

FMN contacts are provided by residues 7 to 9 (PME) and Q68. C98 (proton donor) is an active-site residue. Residues K139, 200-202 (NGE), and 224-225 (CR) each bind FMN.

The protein belongs to the Dus family. DusC subfamily. Requires FMN as cofactor.

The enzyme catalyses 5,6-dihydrouridine(16) in tRNA + NADP(+) = uridine(16) in tRNA + NADPH + H(+). It carries out the reaction 5,6-dihydrouridine(16) in tRNA + NAD(+) = uridine(16) in tRNA + NADH + H(+). Its function is as follows. Catalyzes the synthesis of 5,6-dihydrouridine (D), a modified base found in the D-loop of most tRNAs, via the reduction of the C5-C6 double bond in target uridines. Specifically modifies U16 in tRNAs. This chain is tRNA-dihydrouridine(16) synthase, found in Vibrio cholerae serotype O1 (strain ATCC 39315 / El Tor Inaba N16961).